Consider the following 294-residue polypeptide: Small ribosomal subunit protein uS2 (294 aa).

Positions 232–294 (RATGTTEAPE…SAAGEADAAK (63 aa)) are disordered. Over residues 246–259 (EWERELLEGSKSEE) the composition is skewed to basic and acidic residues. Residues 260 to 294 (AAAPAAAEEAPAAAEEAPAAAEATESAAGEADAAK) show a composition bias toward low complexity.

The protein belongs to the universal ribosomal protein uS2 family.

This is Small ribosomal subunit protein uS2 from Arthrobacter sp. (strain FB24).